Here is a 115-residue protein sequence, read N- to C-terminus: MNEIIRAIEKEQIREDLTQFNIGDTIKVHVRIKEGNRERIQVFEGTVIKKQNGGLRETFTVRRVAYGVGVERTFPINAPIIDKIDVVRRGKVRRAKLFYLRDRVGKAAKVKELTR.

This sequence belongs to the bacterial ribosomal protein bL19 family.

This protein is located at the 30S-50S ribosomal subunit interface and may play a role in the structure and function of the aminoacyl-tRNA binding site. The polypeptide is Large ribosomal subunit protein bL19 (Clostridium perfringens (strain ATCC 13124 / DSM 756 / JCM 1290 / NCIMB 6125 / NCTC 8237 / Type A)).